Consider the following 514-residue polypeptide: 2-isopropylmalate synthase (514 aa).

Positions leucine 5–leucine 267 constitute a Pyruvate carboxyltransferase domain. The Mn(2+) site is built by aspartate 14, histidine 202, histidine 204, and asparagine 238. The regulatory domain stretch occupies residues arginine 394–valine 514.

Belongs to the alpha-IPM synthase/homocitrate synthase family. LeuA type 1 subfamily. As to quaternary structure, homodimer. Mn(2+) serves as cofactor.

The protein resides in the cytoplasm. It carries out the reaction 3-methyl-2-oxobutanoate + acetyl-CoA + H2O = (2S)-2-isopropylmalate + CoA + H(+). It functions in the pathway amino-acid biosynthesis; L-leucine biosynthesis; L-leucine from 3-methyl-2-oxobutanoate: step 1/4. Functionally, catalyzes the condensation of the acetyl group of acetyl-CoA with 3-methyl-2-oxobutanoate (2-ketoisovalerate) to form 3-carboxy-3-hydroxy-4-methylpentanoate (2-isopropylmalate). The polypeptide is 2-isopropylmalate synthase (Hydrogenovibrio crunogenus (strain DSM 25203 / XCL-2) (Thiomicrospira crunogena)).